A 217-amino-acid chain; its full sequence is tRNA (guanine-N(7)-)-methyltransferase (217 aa).

S-adenosyl-L-methionine-binding residues include Glu44, Glu69, Asp96, and Asp118. Residue Asp118 is part of the active site. Residues Lys122, Asp154, and 191–194 (TEYE) contribute to the substrate site.

This sequence belongs to the class I-like SAM-binding methyltransferase superfamily. TrmB family.

It carries out the reaction guanosine(46) in tRNA + S-adenosyl-L-methionine = N(7)-methylguanosine(46) in tRNA + S-adenosyl-L-homocysteine. It functions in the pathway tRNA modification; N(7)-methylguanine-tRNA biosynthesis. In terms of biological role, catalyzes the formation of N(7)-methylguanine at position 46 (m7G46) in tRNA. The protein is tRNA (guanine-N(7)-)-methyltransferase of Bacillus cereus (strain G9842).